Consider the following 359-residue polypeptide: uncharacterized protein (359 aa).

The region spanning 163-275 (VVDTSCIIDG…SKVANLQKVQ (113 aa)) is the PINc domain. Mg(2+) is bound by residues D165 and D244. One can recognise a TRAM domain in the interval 289–350 (IYLPGDSLEL…LQTSAGRMIF (62 aa)).

The protein belongs to the ycf81 family. This sequence in the central section; belongs to the PINc/VapC protein family. It depends on Mg(2+) as a cofactor.

An RNase. This is an uncharacterized protein from Synechocystis sp. (strain ATCC 27184 / PCC 6803 / Kazusa).